The sequence spans 85 residues: Conotoxin Vx15a (85 aa).

A signal peptide spans 1–23 (MEKLTVLILVATVLLTIQVLAQS). Positions 24–49 (DGDKHLMKRSKQYATKRLSALMRGHR) are excised as a propeptide. Gln50 bears the Pyrrolidone carboxylic acid mark.

Belongs to the conotoxin O2 superfamily. Contains 4 disulfide bonds. In terms of tissue distribution, expressed by the venom duct.

The protein localises to the secreted. This chain is Conotoxin Vx15a, found in Conus vexillum (Flag cone).